Here is a 953-residue protein sequence, read N- to C-terminus: ALS2 C-terminal-like protein (953 aa).

MORN repeat units follow at residues 358–380 (YEGE…DGRN), 381–403 (HVGN…QASE), 409–431 (YKCH…TDEV), 432–452 (YKGY…SGPQ), 459–479 (YTGH…DGDR), 483–505 (YIGM…AGVC), 506–528 (YQGT…DDSL), and 529–552 (YEGT…NGFT). The VPS9 domain maps to 796–942 (LFPDTQLLEF…IQKEDMRLHR (147 aa)).

As to quaternary structure, homodimer. Forms a heteromeric complex with ALS2. Interacts with ALS2 and RAB5A. Expressed in heart and kidney.

It is found in the cytoplasm. In terms of biological role, acts as a guanine nucleotide exchange factor (GEF) for Rab5 GTPase. Regulates the ALS2-mediated endosome dynamics. The protein is ALS2 C-terminal-like protein (ALS2CL) of Homo sapiens (Human).